Consider the following 450-residue polypeptide: E3 ubiquitin-protein ligase XB3 (450 aa).

6 ANK repeats span residues 11 to 40 (GDEHDFFRAAQLGDLDALAALLAADPSLAR), 46 to 75 (DRLSVLHIAAANGRIEVLSMFLDRGAPPDA), 79 to 108 (HKQTPLMLAAMHGKIDCVLKLLQADANILM), 113 to 142 (HARTCLHHAAYYGHVDCLQAILAAAQTTPV), 158 to 187 (HGATPLHLAARQGRPGCVQVLLENGAIVSA), and 195 to 225 (PGSTSLHLAARSGNLDCIRKLLAWGADRLQR). Positions 291–312 (ILNGTKYSLPSPSPGDDSADDD) are disordered. Residues 323 to 372 (CCICFDQACTIEVQDCGHQMCAPCTLALCCHNKPNPTTLTPPSPACPFCR) form an RING-type zinc finger. Positions 385 to 450 (SACDPDKPSS…SNLDKPEHDL (66 aa)) are disordered.

In terms of assembly, interacts (via ankyrin repeats) with XA21. Post-translationally, phosphorylated by XA21.

The catalysed reaction is S-ubiquitinyl-[E2 ubiquitin-conjugating enzyme]-L-cysteine + [acceptor protein]-L-lysine = [E2 ubiquitin-conjugating enzyme]-L-cysteine + N(6)-ubiquitinyl-[acceptor protein]-L-lysine.. It participates in protein modification; protein ubiquitination. Functionally, E3 ubiquitin-protein ligase required for full accumulation of the LRR receptor kinase XA21 and XA21-mediated disease resistance. Binding to XA21 may stabilize the receptor kinase and maintain its protein level. Autoubiquitinated in vitro. This Oryza sativa subsp. japonica (Rice) protein is E3 ubiquitin-protein ligase XB3 (XB3).